Here is a 354-residue protein sequence, read N- to C-terminus: Selenide, water dikinase (354 aa).

Sec-21 is an active-site residue. Position 21 (Sec-21) is a non-standard amino acid, selenocysteine. Residues Lys-24 and 51 to 53 (TSD) contribute to the ATP site. Residue Asp-54 participates in Mg(2+) binding. ATP is bound by residues Asp-71, Asp-94, and 141 to 143 (GHT). Asp-94 is a binding site for Mg(2+). Asp-229 contributes to the Mg(2+) binding site.

It belongs to the selenophosphate synthase 1 family. Class I subfamily. In terms of assembly, homodimer. The cofactor is Mg(2+).

The catalysed reaction is hydrogenselenide + ATP + H2O = selenophosphate + AMP + phosphate + 2 H(+). Its function is as follows. Synthesizes selenophosphate from selenide and ATP. The chain is Selenide, water dikinase from Treponema denticola (strain ATCC 35405 / DSM 14222 / CIP 103919 / JCM 8153 / KCTC 15104).